The sequence spans 500 residues: Zinc finger protein ENHYDROUS (500 aa).

The disordered stretch occupies residues Met1 to Asp42. Residues Ser8–Gly21 show a composition bias toward low complexity. Ser51 bears the Phosphoserine mark. 2 consecutive C2H2-type zinc fingers follow at residues Phe61–His83 and Tyr102–His132. The short motif at Ile124–Lys131 is the Nuclear localization signal element. The C2H2-type 2; degenerate zinc finger occupies Trp137–Gly160. The Zn(2+) site is built by Cys139, Cys142, His155, Cys159, Cys166, Cys168, His181, and Cys185. The CCHC-type 2; atypical zinc-finger motif lies at Tyr164 to Ala187. The segment at Arg174–Asp186 is SHR-binding. A disordered region spans residues His196–Val236. Residues Val207 to Gln216 show a composition bias toward basic and acidic residues.

Interacts with the DELLA proteins (e.g. GAI/RGA2, RGA, RGL1, RGL2 and RGLG3), acting as coactivators. At 3 days post anthesis (DPA), expressed in the chalazal endosperm region. By 6 DPA, expressed in the endosperm and embryo. In fully germinated seed, strongest expression in the root tip and not detected in the cotyledons. In 4-days old seedlings, restricted to the vasculature of the cotyledons, the shoot apical meristem region, and the root tip. By 8 days, restricted to newly emerged leaves.

Its subcellular location is the nucleus. Functionally, transcription factor promoting the transition to germination by regulating light and hormonal signaling during seed maturation. Acts as a positive regulator of phytochrome and/or gibberellin action. This is Zinc finger protein ENHYDROUS from Arabidopsis thaliana (Mouse-ear cress).